The chain runs to 240 residues: Gas vesicle protein C (240 aa).

Basic and acidic residues predominate over residues 1–13 (MALKDKWQQDRIG). The disordered stretch occupies residues 1–20 (MALKDKWQQDRIGRQQGVQE). 5 repeats span residues 18–50 (VQER…RQGF), 51–83 (VTGV…LENF), 84–116 (IQQL…LSEF), 117–149 (REDL…LAIF), and 150–207 (RQTL…LQDY). Residues 18 to 207 (VQERQQQVQT…GVFRAELQDY (190 aa)) are 5 X 33 AA tandem repeats.

This sequence belongs to the gas vesicle GvpC family.

The protein localises to the gas vesicle. Its function is as follows. Confers stability, involved in shaping gas vesicles, hollow, gas filled proteinaceous nanostructures. During planktonic growth they allow positioning of the organism at a favorable depth for light or nutrient acquisition. The protein is Gas vesicle protein C of Planktothrix agardhii (Oscillatoria agardhii).